The sequence spans 594 residues: Zinc finger protein 703 (594 aa).

Over residues 1-14 the composition is skewed to polar residues; the sequence is MSDSPAGSNPRTPE. Disordered stretches follow at residues 1-37, 100-298, and 345-370; these read MSDS…VPAV, TCSQ…GHVA, and LVGG…LTGA. The residue at position 2 (Ser-2) is an N-acetylserine. The span at 17-30 shows a compositional bias: gly residues; the sequence is GSGGGSSSGGGGGK. 3 stretches are compositionally biased toward low complexity: residues 134–145, 177–191, and 212–225; these read RSAPGAASAAAA, GSSS…SSSS, and GASV…SSPG. Positions 246–256 are enriched in basic and acidic residues; the sequence is ELDKKEQEAKP. Residue Ser-257 is modified to Phosphoserine. The segment covering 345–356 has biased composition (gly residues); that stretch reads LVGGQLSGGLGL. The C2H2-type zinc-finger motif lies at 460–488; the sequence is HSCNWVAASGPCDKRFATSEELLSHLRTH. Omega-N-methylarginine is present on Arg-584.

It belongs to the Elbow/Noc family. Interacts with DCAF7 and PHB2. Interacts with TLE4; increases transcriptional repression. In terms of tissue distribution, expressed in mammary epithelium.

It is found in the nucleus. It localises to the cytoplasm. In terms of biological role, transcriptional corepressor which does not bind directly to DNA and may regulate transcription through recruitment of histone deacetylases to gene promoters. Regulates cell adhesion, migration and proliferation. May be required for segmental gene expression during hindbrain development. The protein is Zinc finger protein 703 (Znf703) of Mus musculus (Mouse).